Reading from the N-terminus, the 654-residue chain is ATP-dependent rRNA helicase spb-4 (654 aa).

The Q motif signature appears at 17–45 (WDALTPPLAQWILDYLSSMGFTQPTPVQK). The region spanning 48-249 (LELFRGNKDV…TVGLLYPHKI (202 aa)) is the Helicase ATP-binding domain. Residue 61–68 (AVTGSGKT) participates in ATP binding. Positions 197-200 (DEAD) match the DEAD box motif. Residues 286–444 (AIVQLLEKLE…VTPDEVERVS (159 aa)) form the Helicase C-terminal domain. Residues 531–631 (REKKRQEELA…EERAAALAAN (101 aa)) adopt a coiled-coil conformation. Over residues 542–577 (WKEEKAKRAQEENTGDKRKKNEAWSGKAEQEETKLQ) the composition is skewed to basic and acidic residues. The interval 542–654 (WKEEKAKRAQ…SDEEFGGFDD (113 aa)) is disordered. The span at 578 to 588 (RREKKRRKREA) shows a compositional bias: basic residues. Residues 589–625 (KKFSEMTEKEKEEHLKLEQMIEEVRKRNEAKAAEERA) show a composition bias toward basic and acidic residues. Over residues 644–654 (DSDEEFGGFDD) the composition is skewed to acidic residues.

Belongs to the DEAD box helicase family. DDX55/SPB4 subfamily. As to quaternary structure, component of pre-60S ribosomal complexes.

It is found in the nucleus. The protein resides in the nucleolus. The catalysed reaction is ATP + H2O = ADP + phosphate + H(+). Its function is as follows. ATP-binding RNA helicase involved in the biogenesis of 60S ribosomal subunits. Binds 90S pre-ribosomal particles and dissociates from pre-60S ribosomal particles after processing of 27SB pre-rRNA. Required for the normal formation of 18S rRNA through the processing of pre-rRNAs at sites A0, A1 and A2, and the normal formation of 25S and 5.8S rRNAs through the processing of pre-rRNAs at sites C1 and C2. This is ATP-dependent rRNA helicase spb-4 from Neurospora crassa (strain ATCC 24698 / 74-OR23-1A / CBS 708.71 / DSM 1257 / FGSC 987).